Reading from the N-terminus, the 118-residue chain is Large ribosomal subunit protein uL18 (118 aa).

This sequence belongs to the universal ribosomal protein uL18 family. In terms of assembly, part of the 50S ribosomal subunit; part of the 5S rRNA/L5/L18/L25 subcomplex. Contacts the 5S and 23S rRNAs.

Functionally, this is one of the proteins that bind and probably mediate the attachment of the 5S RNA into the large ribosomal subunit, where it forms part of the central protuberance. The sequence is that of Large ribosomal subunit protein uL18 from Rickettsia typhi (strain ATCC VR-144 / Wilmington).